Reading from the N-terminus, the 521-residue chain is Bifunctional purine biosynthesis protein PurH (521 aa).

Residues 1 to 150 (MSEDRKAIKR…KNHPSVAVVT (150 aa)) enclose the MGS-like domain.

The protein belongs to the PurH family.

It carries out the reaction (6R)-10-formyltetrahydrofolate + 5-amino-1-(5-phospho-beta-D-ribosyl)imidazole-4-carboxamide = 5-formamido-1-(5-phospho-D-ribosyl)imidazole-4-carboxamide + (6S)-5,6,7,8-tetrahydrofolate. It catalyses the reaction IMP + H2O = 5-formamido-1-(5-phospho-D-ribosyl)imidazole-4-carboxamide. The protein operates within purine metabolism; IMP biosynthesis via de novo pathway; 5-formamido-1-(5-phospho-D-ribosyl)imidazole-4-carboxamide from 5-amino-1-(5-phospho-D-ribosyl)imidazole-4-carboxamide (10-formyl THF route): step 1/1. Its pathway is purine metabolism; IMP biosynthesis via de novo pathway; IMP from 5-formamido-1-(5-phospho-D-ribosyl)imidazole-4-carboxamide: step 1/1. In Corynebacterium efficiens (strain DSM 44549 / YS-314 / AJ 12310 / JCM 11189 / NBRC 100395), this protein is Bifunctional purine biosynthesis protein PurH.